The following is a 1155-amino-acid chain: PAN2-PAN3 deadenylation complex catalytic subunit pan2 (1155 aa).

WD repeat units lie at residues 102 to 145 (THED…DKLP) and 276 to 315 (ANVS…HFNE). The linker stretch occupies residues 316-452 (MSKEVEFADV…GTKLNGEAED (137 aa)). Residues 453–822 (DPLLKYSNVE…VPCVLAYQVK (370 aa)) form the USP domain. Residues 871-1049 (VALDTEFVDL…IEDARMALRL (179 aa)) form the Exonuclease domain. The a divalent metal cation site is built by Asp874, Glu876, Asp983, and Asp1042. Positions 1095–1155 (TAVTMQNNSG…GDFFGGSPLK (61 aa)) are disordered. Residues 1097 to 1106 (VTMQNNSGRN) show a composition bias toward polar residues. Residues 1107-1124 (TPSTPEVTAPTASAPTTP) show a composition bias toward low complexity.

The protein belongs to the peptidase C19 family. PAN2 subfamily. As to quaternary structure, forms a heterotrimer with an asymmetric homodimer of the regulatory subunit pan3 to form the poly(A)-nuclease (PAN) deadenylation complex. The cofactor is a divalent metal cation.

The protein resides in the cytoplasm. The enzyme catalyses Exonucleolytic cleavage of poly(A) to 5'-AMP.. Its activity is regulated as follows. Positively regulated by the regulatory subunit pan3. Its function is as follows. Catalytic subunit of the poly(A)-nuclease (PAN) deadenylation complex, one of two cytoplasmic mRNA deadenylases involved in mRNA turnover. PAN specifically shortens poly(A) tails of RNA and the activity is stimulated by poly(A)-binding protein pab1. PAN deadenylation is followed by rapid degradation of the shortened mRNA tails by the CCR4-NOT complex. Deadenylated mRNAs are then degraded by two alternative mechanisms, namely exosome-mediated 3'-5' exonucleolytic degradation, or deadenylation-dependent mRNA decaping and subsequent 5'-3' exonucleolytic degradation by xrn1. May also be involved in post-transcriptional maturation of mRNA poly(A) tails. This chain is PAN2-PAN3 deadenylation complex catalytic subunit pan2, found in Aspergillus oryzae (strain ATCC 42149 / RIB 40) (Yellow koji mold).